The following is a 259-amino-acid chain: Thiazole synthase (259 aa).

The active-site Schiff-base intermediate with DXP is lysine 98. 1-deoxy-D-xylulose 5-phosphate is bound by residues glycine 159, 185–186, and 207–208; these read AG and NS.

This sequence belongs to the ThiG family. In terms of assembly, homotetramer. Forms heterodimers with either ThiH or ThiS.

The protein localises to the cytoplasm. The catalysed reaction is [ThiS sulfur-carrier protein]-C-terminal-Gly-aminoethanethioate + 2-iminoacetate + 1-deoxy-D-xylulose 5-phosphate = [ThiS sulfur-carrier protein]-C-terminal Gly-Gly + 2-[(2R,5Z)-2-carboxy-4-methylthiazol-5(2H)-ylidene]ethyl phosphate + 2 H2O + H(+). It functions in the pathway cofactor biosynthesis; thiamine diphosphate biosynthesis. In terms of biological role, catalyzes the rearrangement of 1-deoxy-D-xylulose 5-phosphate (DXP) to produce the thiazole phosphate moiety of thiamine. Sulfur is provided by the thiocarboxylate moiety of the carrier protein ThiS. In vitro, sulfur can be provided by H(2)S. This is Thiazole synthase from Chlorobium phaeobacteroides (strain BS1).